We begin with the raw amino-acid sequence, 309 residues long: Nucleotide-binding protein cgR_1639 (309 aa).

32-39 (GMSGAGLS) contacts ATP. 83–86 (DVRS) contacts GTP.

The protein belongs to the RapZ-like family.

Its function is as follows. Displays ATPase and GTPase activities. The protein is Nucleotide-binding protein cgR_1639 of Corynebacterium glutamicum (strain R).